We begin with the raw amino-acid sequence, 1416 residues long: MGNSPSYNPPAGISPSDWLNLLQSAQRLNPRPSPSDFTDLKNYIHWFHKTQKKPWTFTSGGPASCPPGKFGRVPLVLATLNEVLSNDEGAPGASAPEEQPPPYDPPAVLPIISEGNRNRHRAWALRELQDIKKEIENKAPGSQVWIQTLRLAILQADPTPADLEQLCQYIASPVDQTAHMTSLTAAIAAEAANTLQGFNPQNGTLTQQSAQPNAGDLRSQYQNLWLQAWKNLPTRPSVQPWSTIVQGPAESYVEFVNRLQISLADNLPDGVPKEPIIDSLSYANANKECQQILQGRGLVAAPVGQKLQACAHWAPKTKQPAILVHTPGPKMPGPRQPAPKRPPPGPCYRCLKEGHWARDCPTKTTGPPPGPCPICKDPSHWKRDCPTLKSKKLIEGGPSAPQIITPITDSLSEAELECLLSIPLARSRPSVAVYLSGPWLQPSQNQALMLVDTGAENTVLPQNWLVRDYPRTPAAVLGAGGISRNRYNWLQGPLTLALKPEGPFITIPKILVDTFDKWQILGRDVLSRLQASISIPEEVHPPVVGVLDAPPSHIGLEHLPPPPEVPQFPLNLERLQALQDLVHRSLEAGYISPWDGPGNNPVFPVRKPNGAWRFVHDLRVTNALTKPIPALSPGPPDLTAIPTHLPHIICLDLKDAFFQIPVEDRFRSYFAFTLPTPGGLQPHRRFAWRVLPQGFINSPALFERALQEPLRQVSAAFSQSLLVSYMDDILYVSPTEEQRLQCYQTMAAHLRDLGFQVASEKTRQTPSPVPFLGQMVHERMVTYQSLPTLQISSPISLHQLQTVLGDLQWVSRGTPTTRRPLQLLYSSLKGIDDPRAIIHLSPEQQQGIAELRQALSHNARSRYNEQEPLLAYVHLTRAGSTLVLFQKGAQFPLAYFQTPLTDNQASPWGLLLLLGCQYLQAQALSSYAKTILKYYHNLPKTSLDNWIQSSEDPRVQELLQLWPQISSQGIQPPGPWKTLVTRAEVFLTPQFSPEPIPAALCLFSDGAARRGAYCLWKDHLLDFQAVPAPESAQKGELAGLLAGLAAAPPEPLNIWVDSKYLYSLLRTLVLGAWLQPDPVPSYALLYKSLLRHPAIFVGHVRSHSSASHPIASLNNYVDQLLPLETPEQWHKLTHCNSRALSRWPNPRISAWDPRSPATLCETCQRLNPTGGGKMRTIQRGWAPNHIWQADITHYKYKQFTYALHVFVDTYSGATHASAKRGLTTQTTIEGLLEAIVHLGRPKKLNTDQGANYTSKTFVRFCQQFGISLSHHVPYNPTSSGLVERTNGLLKLLLSKYHLDEPHLPMTQALSRALWTHNQINLLPILKTRWELHHSPPLAVISEGGETPKGSDKLFLYKLPGQNNRRWLGPLPALVEASGGALLATNPPVWVPWRLLKAFKCLKNDGPEDAPNRSSDG.

Residue Gly-2 is the site of N-myristoyl glycine; by host attachment. The PPXY motif motif lies at 100 to 103 (PPPY). CCHC-type zinc fingers lie at residues 345-362 (GPCY…DCPT) and 370-387 (GPCP…DCPT). The Peptidase A2 domain occupies 447–525 (ALMLVDTGAE…DKWQILGRDV (79 aa)). Asp-452 (protease; shared with dimeric partner) is an active-site residue. Residues 586 to 776 (LEAGYISPWD…SPVPFLGQMV (191 aa)) form the Reverse transcriptase domain. 9 residues coordinate Mg(2+): Asp-652, Asp-727, Asp-728, Asp-1005, Glu-1036, Asp-1057, Asp-1118, Asp-1190, and Asp-1247. The RNase H type-1 domain maps to 996-1126 (IPAALCLFSD…VDQLLPLETP (131 aa)). The Integrase catalytic domain maps to 1179–1343 (RGWAPNHIWQ…SPPLAVISEG (165 aa)). Positions 1352 to 1400 (KLFLYKLPGQNNRRWLGPLPALVEASGGALLATNPPVWVPWRLLKAFKC) form a DNA-binding region, integrase-type.

The protein belongs to the retroviral Pol polyprotein family. Homodimer; the homodimers are part of the immature particles. Interacts with human TSG101 and NEDD4; these interactions are essential for budding and release of viral particles. As to quaternary structure, homodimer; further assembles as homohexamers. Mg(2+) is required as a cofactor. Post-translationally, phosphorylation of the matrix protein p15 by MAPK1 seems to play a role in budding. Myristoylated. Myristoylation of the matrix (MA) domain mediates the transport and binding of Gag polyproteins to the host plasma membrane and is required for the assembly of viral particles. In terms of processing, specific enzymatic cleavages by the viral protease yield mature proteins. The polyprotein is cleaved during and after budding, this process is termed maturation. The protease is autoproteolytically processed at its N- and C-termini.

It localises to the virion. The catalysed reaction is Endonucleolytic cleavage to 5'-phosphomonoester.. It catalyses the reaction DNA(n) + a 2'-deoxyribonucleoside 5'-triphosphate = DNA(n+1) + diphosphate. In terms of biological role, the matrix domain targets Gag, Gag-Pro and Gag-Pro-Pol polyproteins to the plasma membrane via a multipartite membrane binding signal, that includes its myristoylated N-terminus. Matrix protein. Its function is as follows. Forms the spherical core of the virus that encapsulates the genomic RNA-nucleocapsid complex. Functionally, binds strongly to viral nucleic acids and promote their aggregation. Also destabilizes the nucleic acids duplexes via highly structured zinc-binding motifs. In terms of biological role, the aspartyl protease mediates proteolytic cleavages of Gag and Gag-Pol polyproteins during or shortly after the release of the virion from the plasma membrane. Cleavages take place as an ordered, step-wise cascade to yield mature proteins. This process is called maturation. Displays maximal activity during the budding process just prior to particle release from the cell. RT is a multifunctional enzyme that converts the viral RNA genome into dsDNA in the cytoplasm, shortly after virus entry into the cell. This enzyme displays a DNA polymerase activity that can copy either DNA or RNA templates, and a ribonuclease H (RNase H) activity that cleaves the RNA strand of RNA-DNA heteroduplexes in a partially processive 3' to 5'-endonucleasic mode. Conversion of viral genomic RNA into dsDNA requires many steps. A tRNA-Pro binds to the primer-binding site (PBS) situated at the 5'-end of the viral RNA. RT uses the 3' end of the tRNA primer to perform a short round of RNA-dependent minus-strand DNA synthesis. The reading proceeds through the U5 region and ends after the repeated (R) region which is present at both ends of viral RNA. The portion of the RNA-DNA heteroduplex is digested by the RNase H, resulting in a ssDNA product attached to the tRNA primer. This ssDNA/tRNA hybridizes with the identical R region situated at the 3' end of viral RNA. This template exchange, known as minus-strand DNA strong stop transfer, can be either intra- or intermolecular. RT uses the 3' end of this newly synthesized short ssDNA to perform the RNA-dependent minus-strand DNA synthesis of the whole template. RNase H digests the RNA template except for a polypurine tract (PPT) situated at the 5' end of the genome. It is not clear if both polymerase and RNase H activities are simultaneous. RNase H probably can proceed both in a polymerase-dependent (RNA cut into small fragments by the same RT performing DNA synthesis) and a polymerase-independent mode (cleavage of remaining RNA fragments by free RTs). Secondly, RT performs DNA-directed plus-strand DNA synthesis using the PPT that has not been removed by RNase H as primer. PPT and tRNA primers are then removed by RNase H. The 3' and 5' ssDNA PBS regions hybridize to form a circular dsDNA intermediate. Strand displacement synthesis by RT to the PBS and PPT ends produces a blunt ended, linear dsDNA copy of the viral genome that includes long terminal repeats (LTRs) at both ends. Its function is as follows. Catalyzes viral DNA integration into the host chromosome, by performing a series of DNA cutting and joining reactions. This is Gag-Pro-Pol polyprotein (pol) from Bos taurus (Bovine).